We begin with the raw amino-acid sequence, 71 residues long: Large ribosomal subunit protein uL30 (71 aa).

The protein belongs to the universal ribosomal protein uL30 family. Part of the 50S ribosomal subunit.

The chain is Large ribosomal subunit protein uL30 from Mycolicibacterium paratuberculosis (strain ATCC BAA-968 / K-10) (Mycobacterium paratuberculosis).